Here is a 467-residue protein sequence, read N- to C-terminus: Gamma-aminobutyric acid receptor subunit rho-3 (467 aa).

Positions 1–24 (MVLAFQLVSFTYIWIILKPNVCAA) are cleaved as a signal peptide. Residues 25 to 266 (SNIKMTHQRC…LFINFVLRRH (242 aa)) lie on the Extracellular side of the membrane. Arg111 and Ser175 together coordinate 4-aminobutanoate. A disulfide bridge connects residues Cys184 and Cys198. Glu203 contacts 4-aminobutanoate. N-linked (GlcNAc...) asparagine glycosylation occurs at Asn220. A helical membrane pass occupies residues 267-287 (VFFFVLQTYFPAILMVMLSWV). Topologically, residues 288 to 299 (SFWIDRRAVPAR) are cytoplasmic. A helical membrane pass occupies residues 300–320 (VSLGITTVLTMSTIITAVSAS). The Extracellular portion of the chain corresponds to 321–331 (MPQVSYLKAVD). A helical transmembrane segment spans residues 332 to 352 (VYLWVSSLFVFLSVIEYAAVN). Residues 347-448 (EYAAVNYLTT…NNHVIDTYSR (102 aa)) form an interaction with SQSTM1 region. The Cytoplasmic portion of the chain corresponds to 353 to 446 (YLTTVEERKQ…LENNHVIDTY (94 aa)). The helical transmembrane segment at 447–467 (SRILFPIVYILFNLFYWGVYV) threads the bilayer.

It belongs to the ligand-gated ion channel (TC 1.A.9) family. Gamma-aminobutyric acid receptor (TC 1.A.9.5) subfamily. GABRR3 sub-subfamily. Three rho subunits (rho-1/GBRR1, rho-2/GBRR2 and rho-3/GBRR3) coassemble either to form functional homopentamers or heteropentamers. Forms a ternary complex with SQSTM1 and PRKCZ.

The protein resides in the postsynaptic cell membrane. It localises to the cell membrane. It carries out the reaction chloride(in) = chloride(out). With respect to regulation, inhibited by TPMPA, a rho-specific antagonist, when forming a homopentamer. Functionally, rho subunit of the pentameric ligand-gated chloride channels responsible for mediating the effects of gamma-aminobutyric acid (GABA), the major inhibitory neurotransmitter in the brain. Rho-containing GABA-gated chloride channels are a subclass of GABA(A) receptors (GABAARs) entirely composed of rho subunits, where GABA molecules bind at the rho intersubunit interfaces. When activated by GABA, rho-GABAARs selectively allow the flow of chloride anions across the cell membrane down their electrochemical gradient. This Homo sapiens (Human) protein is Gamma-aminobutyric acid receptor subunit rho-3.